The chain runs to 969 residues: RNA polymerase-associated protein RapA (969 aa).

One can recognise a Helicase ATP-binding domain in the interval 162 to 339 (EVGQRVAPRV…FARLALLDAD (178 aa)). Residue 175-182 (DEVGLGKT) coordinates ATP. The DEAH box motif lies at 285 to 288 (DEAH). A Helicase C-terminal domain is found at 492 to 663 (RIEWLITFLK…GFLKNPQAVG (172 aa)).

The protein belongs to the SNF2/RAD54 helicase family. RapA subfamily. In terms of assembly, interacts with the RNAP. Has a higher affinity for the core RNAP than for the holoenzyme. Its ATPase activity is stimulated by binding to RNAP.

Its function is as follows. Transcription regulator that activates transcription by stimulating RNA polymerase (RNAP) recycling in case of stress conditions such as supercoiled DNA or high salt concentrations. Probably acts by releasing the RNAP, when it is trapped or immobilized on tightly supercoiled DNA. Does not activate transcription on linear DNA. Probably not involved in DNA repair. The protein is RNA polymerase-associated protein RapA of Actinobacillus pleuropneumoniae serotype 7 (strain AP76).